The sequence spans 556 residues: ATP synthase subunit beta-2, mitochondrial (556 aa).

Positions 1 to 20 (MASRRVLSSLLRSSSGRSAA) are enriched in low complexity. Positions 1 to 37 (MASRRVLSSLLRSSSGRSAAKLVNRNPRLPSPSPARH) are disordered. The transit peptide at 1-51 (MASRRVLSSLLRSSSGRSAAKLVNRNPRLPSPSPARHAAPCSYLLGRVAEY) directs the protein to the mitochondrion. Ser59 bears the Phosphoserine mark. 231-238 (GGAGVGKT) provides a ligand contact to ATP.

This sequence belongs to the ATPase alpha/beta chains family. In terms of assembly, F-type ATPases have 2 components, CF(1) - the catalytic core - and CF(0) - the membrane proton channel. CF(1) has five subunits: alpha(3), beta(3), gamma(1), delta(1), epsilon(1). CF(0) has three main subunits: a, b and c.

The protein resides in the mitochondrion. It localises to the mitochondrion inner membrane. The catalysed reaction is ATP + H2O + 4 H(+)(in) = ADP + phosphate + 5 H(+)(out). Functionally, mitochondrial membrane ATP synthase (F(1)F(0) ATP synthase or Complex V) produces ATP from ADP in the presence of a proton gradient across the membrane which is generated by electron transport complexes of the respiratory chain. F-type ATPases consist of two structural domains, F(1) - containing the extramembraneous catalytic core, and F(0) - containing the membrane proton channel, linked together by a central stalk and a peripheral stalk. During catalysis, ATP synthesis in the catalytic domain of F(1) is coupled via a rotary mechanism of the central stalk subunits to proton translocation. Subunits alpha and beta form the catalytic core in F(1). Rotation of the central stalk against the surrounding alpha(3)beta(3) subunits leads to hydrolysis of ATP in three separate catalytic sites on the beta subunits. This Arabidopsis thaliana (Mouse-ear cress) protein is ATP synthase subunit beta-2, mitochondrial.